The chain runs to 511 residues: 2'-5'-oligoadenylate synthase-like protein 1 (511 aa).

Ubiquitin-like domains are found at residues 350 to 429 (IQVT…ISPE) and 430 to 506 (IQVF…EGAA).

The protein belongs to the 2-5A synthase family. Specifically interacts with the ligand binding domain of the thyroid receptor (TR). TRIP14 does not require the presence of thyroid hormone for its interaction. Binds MBD1.

The protein localises to the nucleus. It localises to the nucleolus. Its subcellular location is the cytoplasm. Functionally, does not have 2'-5'-OAS activity, but can bind double-stranded RNA. Displays antiviral activity via an alternative antiviral pathway independent of RNase L. This Mus musculus (Mouse) protein is 2'-5'-oligoadenylate synthase-like protein 1 (Oasl1).